The primary structure comprises 305 residues: Probable cell division protein WhiA (305 aa).

The segment at residues 269–302 (TIKELGELLDPPLGKSGVNHRLRKLVERSNDLKK) is a DNA-binding region (H-T-H motif).

This sequence belongs to the WhiA family.

Functionally, involved in cell division and chromosome segregation. The sequence is that of Probable cell division protein WhiA from Lactococcus lactis subsp. cremoris (strain MG1363).